We begin with the raw amino-acid sequence, 92 residues long: Large ribosomal subunit protein bL28 (92 aa).

It belongs to the bacterial ribosomal protein bL28 family.

The chain is Large ribosomal subunit protein bL28 from Borrelia hermsii (strain HS1 / DAH).